Consider the following 192-residue polypeptide: UPF0149 protein VIBHAR_03551 (192 aa).

The protein belongs to the UPF0149 family.

The polypeptide is UPF0149 protein VIBHAR_03551 (Vibrio campbellii (strain ATCC BAA-1116)).